An 82-amino-acid chain; its full sequence is Small ribosomal subunit protein bS18 (82 aa).

This sequence belongs to the bacterial ribosomal protein bS18 family. In terms of assembly, part of the 30S ribosomal subunit. Forms a tight heterodimer with protein bS6.

Functionally, binds as a heterodimer with protein bS6 to the central domain of the 16S rRNA, where it helps stabilize the platform of the 30S subunit. The sequence is that of Small ribosomal subunit protein bS18 from Bifidobacterium adolescentis (strain ATCC 15703 / DSM 20083 / NCTC 11814 / E194a).